We begin with the raw amino-acid sequence, 352 residues long: Phosphoribosylformylglycinamidine cyclo-ligase (352 aa).

This sequence belongs to the AIR synthase family.

Its subcellular location is the cytoplasm. The catalysed reaction is 2-formamido-N(1)-(5-O-phospho-beta-D-ribosyl)acetamidine + ATP = 5-amino-1-(5-phospho-beta-D-ribosyl)imidazole + ADP + phosphate + H(+). It participates in purine metabolism; IMP biosynthesis via de novo pathway; 5-amino-1-(5-phospho-D-ribosyl)imidazole from N(2)-formyl-N(1)-(5-phospho-D-ribosyl)glycinamide: step 2/2. In Hahella chejuensis (strain KCTC 2396), this protein is Phosphoribosylformylglycinamidine cyclo-ligase.